An 81-amino-acid chain; its full sequence is Sulfur carrier protein TusA (81 aa).

The active-site Cysteine persulfide intermediate is cysteine 19.

The protein belongs to the sulfur carrier protein TusA family. Interacts with IscS.

The protein resides in the cytoplasm. Its pathway is tRNA modification. Sulfur carrier protein involved in sulfur trafficking in the cell. Part of a sulfur-relay system required for 2-thiolation during synthesis of 2-thiouridine of the modified wobble base 5-methylaminomethyl-2-thiouridine (mnm(5)s(2)U) in tRNA. Interacts with IscS and stimulates its cysteine desulfurase activity. Accepts an activated sulfur from IscS, which is then transferred to TusD, and thus determines the direction of sulfur flow from IscS to 2-thiouridine formation. Also appears to be involved in sulfur transfer for the biosynthesis of molybdopterin. The protein is Sulfur carrier protein TusA of Pectobacterium atrosepticum (strain SCRI 1043 / ATCC BAA-672) (Erwinia carotovora subsp. atroseptica).